The primary structure comprises 77 residues: MAVFEDVRDVVVEQLSVDPQAVKLESKIIEDLGADSLDVVELVMALEEKFEVEIPDSEAEKLVSIQDVVNYIEKLGK.

One can recognise a Carrier domain in the interval 1–76 (MAVFEDVRDV…DVVNYIEKLG (76 aa)). Ser36 is modified (O-(pantetheine 4'-phosphoryl)serine).

It belongs to the acyl carrier protein (ACP) family. 4'-phosphopantetheine is transferred from CoA to a specific serine of apo-ACP by AcpS. This modification is essential for activity because fatty acids are bound in thioester linkage to the sulfhydryl of the prosthetic group.

The protein localises to the cytoplasm. It participates in lipid metabolism; fatty acid biosynthesis. Its function is as follows. Carrier of the growing fatty acid chain in fatty acid biosynthesis. The polypeptide is Acyl carrier protein (Campylobacter concisus (strain 13826)).